The chain runs to 232 residues: Biosynthetic peptidoglycan transglycosylase (232 aa).

A helical transmembrane segment spans residues 12 to 31 (YLLWFMAASVVLVAVLRWVP).

This sequence belongs to the glycosyltransferase 51 family.

The protein resides in the cell inner membrane. The catalysed reaction is [GlcNAc-(1-&gt;4)-Mur2Ac(oyl-L-Ala-gamma-D-Glu-L-Lys-D-Ala-D-Ala)](n)-di-trans,octa-cis-undecaprenyl diphosphate + beta-D-GlcNAc-(1-&gt;4)-Mur2Ac(oyl-L-Ala-gamma-D-Glu-L-Lys-D-Ala-D-Ala)-di-trans,octa-cis-undecaprenyl diphosphate = [GlcNAc-(1-&gt;4)-Mur2Ac(oyl-L-Ala-gamma-D-Glu-L-Lys-D-Ala-D-Ala)](n+1)-di-trans,octa-cis-undecaprenyl diphosphate + di-trans,octa-cis-undecaprenyl diphosphate + H(+). Its pathway is cell wall biogenesis; peptidoglycan biosynthesis. Peptidoglycan polymerase that catalyzes glycan chain elongation from lipid-linked precursors. This is Biosynthetic peptidoglycan transglycosylase from Pseudomonas aeruginosa (strain ATCC 15692 / DSM 22644 / CIP 104116 / JCM 14847 / LMG 12228 / 1C / PRS 101 / PAO1).